A 356-amino-acid chain; its full sequence is Dihydroorotate dehydrogenase (quinone) (356 aa).

Residues 66–70 (AGFDK) and T90 each bind FMN. K70 serves as a coordination point for substrate. 115–119 (NRMGF) serves as a coordination point for substrate. Positions 143 and 176 each coordinate FMN. A substrate-binding site is contributed by N176. S179 acts as the Nucleophile in catalysis. Position 181 (N181) interacts with substrate. Positions 212 and 240 each coordinate FMN. Substrate is bound at residue 241-242 (NT). Residues G264, G293, and 314-315 (YT) contribute to the FMN site.

It belongs to the dihydroorotate dehydrogenase family. Type 2 subfamily. Monomer. FMN is required as a cofactor.

The protein localises to the cell membrane. The catalysed reaction is (S)-dihydroorotate + a quinone = orotate + a quinol. Its pathway is pyrimidine metabolism; UMP biosynthesis via de novo pathway; orotate from (S)-dihydroorotate (quinone route): step 1/1. In terms of biological role, catalyzes the conversion of dihydroorotate to orotate with quinone as electron acceptor. The sequence is that of Dihydroorotate dehydrogenase (quinone) (pyrD) from Mycobacterium leprae (strain TN).